The sequence spans 503 residues: Putative (R)-citramalate synthase CimA (503 aa).

A Pyruvate carboxyltransferase domain is found at 9–257; sequence IRFFDTTLRD…DTGIATEELY (249 aa).

Belongs to the alpha-IPM synthase/homocitrate synthase family. As to quaternary structure, homodimer.

The catalysed reaction is pyruvate + acetyl-CoA + H2O = (3R)-citramalate + CoA + H(+). The protein operates within amino-acid biosynthesis; L-isoleucine biosynthesis; 2-oxobutanoate from pyruvate: step 1/3. Catalyzes the condensation of pyruvate and acetyl-coenzyme A to form (R)-citramalate. The chain is Putative (R)-citramalate synthase CimA from Methanoculleus marisnigri (strain ATCC 35101 / DSM 1498 / JR1).